The chain runs to 76 residues: Defensin-like protein 125 (76 aa).

A signal peptide spans Met-1–Gly-25. 4 cysteine pairs are disulfide-bonded: Cys-30-Cys-74, Cys-41-Cys-60, Cys-46-Cys-68, and Cys-50-Cys-70.

It belongs to the DEFL family.

The protein localises to the secreted. This chain is Defensin-like protein 125 (LCR54), found in Arabidopsis thaliana (Mouse-ear cress).